A 530-amino-acid chain; its full sequence is Regulatory protein LuxO (530 aa).

In terms of domain architecture, Sigma-54 factor interaction spans 194-423 (IIGNSGPMLA…LEHVINRAAL (230 aa)). ATP-binding positions include 222–229 (GETGVGKE) and 285–294 (ADGGTLFLDE).

In terms of biological role, involved in the regulation of different processes depending on the cell density. Acts together with sigma-54 to repress, perhaps indirectly, some genes. In Vibrio cholerae serotype O1 (strain ATCC 39541 / Classical Ogawa 395 / O395), this protein is Regulatory protein LuxO (luxO).